Reading from the N-terminus, the 2237-residue chain is Activating signal cointegrator 1 complex subunit 3-like (2237 aa).

4 disordered regions span residues 1–48, 71–118, 242–330, and 445–472; these read MSEE…RGEM, TIEK…KPID, DEEE…SKLI, and EKTI…DEIK. Basic and acidic residues predominate over residues 24-37; that stretch reads ERNRSELKEPKGEP. Residues 79 to 97 are compositionally biased toward polar residues; sequence VNSSNDTYSTTKKVKNQNP. The span at 105–114 shows a compositional bias: low complexity; the sequence is RKSNGNNNNE. Residues 242–282 are compositionally biased toward acidic residues; that stretch reads DEEEEEENLSDFEIRDDDDDDDDVDNNEVDDNNNNDSEAQD. Composition is skewed to basic and acidic residues over residues 312–325 and 446–460; these read QKPD…DKNN and KTIE…DVEM. Positions 440 to 468 form a coiled coil; it reads TAATTEKTIEKTESNKKDVEMKQQQQQQQ. One can recognise a Helicase ATP-binding 1 domain in the interval 561 to 745; that stretch reads DCAFKTDNNL…FLRVEPDGVF (185 aa). Position 574 to 581 (574 to 581) interacts with ATP; that stretch reads APTSSGKT. A DEAH box motif is present at residues 687–690; it reads DEIH. One can recognise a Helicase C-terminal 1 domain in the interval 755–990; it reads PLEQQYIGIS…TVRDAVNWLG (236 aa). The region spanning 1050-1356 is the SEC63 1 domain; the sequence is STELGKVASH…GAEYSLPISF (307 aa). The Helicase ATP-binding 2 domain maps to 1407-1584; it reads NCMYQSNDNA…WIGATPQTCY (178 aa). 1420–1427 is an ATP binding site; it reads APTNSGKT. The short motif at 1526-1529 is the DEAH box element; sequence DELH. The Helicase C-terminal 2 domain occupies 1657–1832; it reads TLTKPYLVCE…TITKKQDALD (176 aa). In terms of domain architecture, SEC63 2 spans 1892–2215; sequence PLNLGIIASY…GCDQEHELNI (324 aa).

It belongs to the helicase family.

The polypeptide is Activating signal cointegrator 1 complex subunit 3-like (ascc3l) (Dictyostelium discoideum (Social amoeba)).